Reading from the N-terminus, the 30-residue chain is Cycloviolin-C (30 aa).

The segment at residues 1–30 is a cross-link (cyclopeptide (Gly-Asn)); that stretch reads GIPCGESCVFIPCLTTVAGCSCKNKVCYRN. Intrachain disulfides connect C4-C20, C8-C22, and C13-C27.

This is a cyclic peptide.

In terms of biological role, probably participates in a plant defense mechanism. Has anti-HIV activity. This is Cycloviolin-C from Leonia cymosa (Sacha uba).